A 359-amino-acid chain; its full sequence is tRNA N6-adenosine threonylcarbamoyltransferase (359 aa).

The Fe cation site is built by His-121 and His-125. Residues 143 to 147 (LVSGG), Asp-176, Gly-189, and Asn-286 each bind substrate. Residue Asp-311 participates in Fe cation binding.

The protein belongs to the KAE1 / TsaD family. The cofactor is Fe(2+).

It localises to the cytoplasm. It carries out the reaction L-threonylcarbamoyladenylate + adenosine(37) in tRNA = N(6)-L-threonylcarbamoyladenosine(37) in tRNA + AMP + H(+). In terms of biological role, required for the formation of a threonylcarbamoyl group on adenosine at position 37 (t(6)A37) in tRNAs that read codons beginning with adenine. Is involved in the transfer of the threonylcarbamoyl moiety of threonylcarbamoyl-AMP (TC-AMP) to the N6 group of A37, together with TsaE and TsaB. TsaD likely plays a direct catalytic role in this reaction. The polypeptide is tRNA N6-adenosine threonylcarbamoyltransferase (Jannaschia sp. (strain CCS1)).